The following is a 63-amino-acid chain: Putative flagellar calcium-binding protein (63 aa).

The segment covering Met-1–Thr-11 has biased composition (polar residues). The interval Met-1 to Lys-23 is disordered. Residues Gly-12–Lys-23 show a composition bias toward basic and acidic residues. One can recognise an EF-hand domain in the interval Glu-40–Glu-63. Asp-53, Asn-55, Thr-57, and Lys-59 together coordinate Ca(2+).

It belongs to the calflagin family.

Its subcellular location is the cell projection. It is found in the cilium. The protein localises to the flagellum. This Crithidia fasciculata protein is Putative flagellar calcium-binding protein (CABP).